The primary structure comprises 292 residues: MLYIIKPFLQKLRYLLQLLLTQIVGWSAECHGSWFTRIIIKLFILFYKVNMQESLQQDIAFYKTFNAFFIRYLNKNARPINSNPSVIVQPADGIISQLGTIQDHLILQAKKHFYSLEALLAGQTRIINYFRCGNFTTIYLSPRDYHRVHMPCNGVLRQMIYVPGNLFSVNPSMVTHVPNLFARNERVICLFDSNFGLIAQILVGATIVGSIATIWSGTVMPPREKVIKCWHYPKFGDKNAVILLKGQEMGYFKLGSTVINLFRYGRIELCDHLYTNCITRVGLPLGYSNKKI.

Catalysis depends on charge relay system; for autoendoproteolytic cleavage activity residues D92, H149, and S256. Residue S256 is the Schiff-base intermediate with substrate; via pyruvic acid; for decarboxylase activity of the active site. S256 carries the pyruvic acid (Ser); by autocatalysis modification.

The protein belongs to the phosphatidylserine decarboxylase family. PSD-B subfamily. Prokaryotic type I sub-subfamily. In terms of assembly, heterodimer of a large membrane-associated beta subunit and a small pyruvoyl-containing alpha subunit. Pyruvate serves as cofactor. Post-translationally, is synthesized initially as an inactive proenzyme. Formation of the active enzyme involves a self-maturation process in which the active site pyruvoyl group is generated from an internal serine residue via an autocatalytic post-translational modification. Two non-identical subunits are generated from the proenzyme in this reaction, and the pyruvate is formed at the N-terminus of the alpha chain, which is derived from the carboxyl end of the proenzyme. The autoendoproteolytic cleavage occurs by a canonical serine protease mechanism, in which the side chain hydroxyl group of the serine supplies its oxygen atom to form the C-terminus of the beta chain, while the remainder of the serine residue undergoes an oxidative deamination to produce ammonia and the pyruvoyl prosthetic group on the alpha chain. During this reaction, the Ser that is part of the protease active site of the proenzyme becomes the pyruvoyl prosthetic group, which constitutes an essential element of the active site of the mature decarboxylase.

The protein localises to the cell membrane. It carries out the reaction a 1,2-diacyl-sn-glycero-3-phospho-L-serine + H(+) = a 1,2-diacyl-sn-glycero-3-phosphoethanolamine + CO2. Its pathway is phospholipid metabolism; phosphatidylethanolamine biosynthesis; phosphatidylethanolamine from CDP-diacylglycerol: step 2/2. Functionally, catalyzes the formation of phosphatidylethanolamine (PtdEtn) from phosphatidylserine (PtdSer). The polypeptide is Phosphatidylserine decarboxylase proenzyme (Baumannia cicadellinicola subsp. Homalodisca coagulata).